Reading from the N-terminus, the 254-residue chain is 5-oxoprolinase subunit A (254 aa).

Belongs to the LamB/PxpA family. As to quaternary structure, forms a complex composed of PxpA, PxpB and PxpC.

The catalysed reaction is 5-oxo-L-proline + ATP + 2 H2O = L-glutamate + ADP + phosphate + H(+). Functionally, catalyzes the cleavage of 5-oxoproline to form L-glutamate coupled to the hydrolysis of ATP to ADP and inorganic phosphate. This is 5-oxoprolinase subunit A from Acinetobacter baumannii (strain AB307-0294).